Here is a 328-residue protein sequence, read N- to C-terminus: MNQVDYLRISLIDRCNFRCQYCMPEGSELDYILKQQLLTDEELLTLVQEVFIPVGFRQFRLTGGEPLLRPRVVDLVGAIASLPQTQDLSMTTNGFLLAPIAQNLYDAGLRRINISLDSLDPHIFDQIIGSHGRSRWQQVWDGIQAAHRVGFDPLKLNVVVIPGVNDHEILDLAALTIDKQWHVRFIEFMPIGNGELFGDRGWVSSSQLRQQIRDRWGLTDAQVRGSGPADVFQIPGAKGTLGFISQMSECFCDRCNRMRLSADGWLRPCLLNETGQLDLKTSLRSGVSIHQLREQVRHLLAIKPEINYKGRDSGTTGAYSRTMSQIGG.

Residues 1 to 229 (MNQVDYLRIS…DAQVRGSGPA (229 aa)) enclose the Radical SAM core domain. Position 8 (arginine 8) interacts with GTP. [4Fe-4S] cluster-binding residues include cysteine 15 and cysteine 19. Tyrosine 21 lines the S-adenosyl-L-methionine pocket. Cysteine 22 lines the [4Fe-4S] cluster pocket. GTP is bound at residue arginine 60. Glycine 64 serves as a coordination point for S-adenosyl-L-methionine. Threonine 91 provides a ligand contact to GTP. Residue serine 115 participates in S-adenosyl-L-methionine binding. Residue lysine 155 participates in GTP binding. An S-adenosyl-L-methionine-binding site is contributed by methionine 189. Positions 252 and 255 each coordinate [4Fe-4S] cluster. Position 257–259 (257–259 (RMR)) interacts with GTP. Cysteine 269 contributes to the [4Fe-4S] cluster binding site.

It belongs to the radical SAM superfamily. MoaA family. Monomer and homodimer. Requires [4Fe-4S] cluster as cofactor.

It catalyses the reaction GTP + AH2 + S-adenosyl-L-methionine = (8S)-3',8-cyclo-7,8-dihydroguanosine 5'-triphosphate + 5'-deoxyadenosine + L-methionine + A + H(+). Its pathway is cofactor biosynthesis; molybdopterin biosynthesis. Functionally, catalyzes the cyclization of GTP to (8S)-3',8-cyclo-7,8-dihydroguanosine 5'-triphosphate. This chain is GTP 3',8-cyclase, found in Trichormus variabilis (strain ATCC 29413 / PCC 7937) (Anabaena variabilis).